The sequence spans 97 residues: Aspartyl/glutamyl-tRNA(Asn/Gln) amidotransferase subunit C (97 aa).

Belongs to the GatC family. As to quaternary structure, heterotrimer of A, B and C subunits.

The catalysed reaction is L-glutamyl-tRNA(Gln) + L-glutamine + ATP + H2O = L-glutaminyl-tRNA(Gln) + L-glutamate + ADP + phosphate + H(+). It carries out the reaction L-aspartyl-tRNA(Asn) + L-glutamine + ATP + H2O = L-asparaginyl-tRNA(Asn) + L-glutamate + ADP + phosphate + 2 H(+). Its function is as follows. Allows the formation of correctly charged Asn-tRNA(Asn) or Gln-tRNA(Gln) through the transamidation of misacylated Asp-tRNA(Asn) or Glu-tRNA(Gln) in organisms which lack either or both of asparaginyl-tRNA or glutaminyl-tRNA synthetases. The reaction takes place in the presence of glutamine and ATP through an activated phospho-Asp-tRNA(Asn) or phospho-Glu-tRNA(Gln). The polypeptide is Aspartyl/glutamyl-tRNA(Asn/Gln) amidotransferase subunit C (Synechococcus sp. (strain CC9311)).